A 322-amino-acid polypeptide reads, in one-letter code: Ribose-phosphate pyrophosphokinase 1 (322 aa).

ATP-binding positions include 39 to 41 (DGE) and 98 to 99 (RQ). Residues His-132 and Asp-173 each contribute to the Mg(2+) site. The active site involves Lys-196. Residues Arg-198, Asp-224, and 228-232 (DTAGT) contribute to the D-ribose 5-phosphate site.

Belongs to the ribose-phosphate pyrophosphokinase family. Class I subfamily. Homohexamer. It depends on Mg(2+) as a cofactor.

It localises to the cytoplasm. The catalysed reaction is D-ribose 5-phosphate + ATP = 5-phospho-alpha-D-ribose 1-diphosphate + AMP + H(+). Its pathway is metabolic intermediate biosynthesis; 5-phospho-alpha-D-ribose 1-diphosphate biosynthesis; 5-phospho-alpha-D-ribose 1-diphosphate from D-ribose 5-phosphate (route I): step 1/1. In terms of biological role, involved in the biosynthesis of the central metabolite phospho-alpha-D-ribosyl-1-pyrophosphate (PRPP) via the transfer of pyrophosphoryl group from ATP to 1-hydroxyl of ribose-5-phosphate (Rib-5-P). This Streptococcus mutans serotype c (strain ATCC 700610 / UA159) protein is Ribose-phosphate pyrophosphokinase 1.